The primary structure comprises 535 residues: CTP synthase (535 aa).

Residues 1-267 (MTKFIFVTGG…DDIVIKKLGL (267 aa)) form an amidoligase domain region. Residue S13 coordinates CTP. Residue S13 participates in UTP binding. 14–19 (SLGKGI) lines the ATP pocket. Y54 contributes to the L-glutamine binding site. D71 is an ATP binding site. Mg(2+) contacts are provided by D71 and E141. Residues 148–150 (DIE), 188–193 (KTKPTQ), and K224 each bind CTP. UTP-binding positions include 188-193 (KTKPTQ) and K224. The region spanning 292–534 (TIGIVGKYVS…IGASLKTNKL (243 aa)) is the Glutamine amidotransferase type-1 domain. G354 contacts L-glutamine. The active-site Nucleophile; for glutamine hydrolysis is the C381. Residues 382-385 (LGMQ), E405, and R462 each bind L-glutamine. Active-site residues include H507 and E509.

This sequence belongs to the CTP synthase family. Homotetramer.

The catalysed reaction is UTP + L-glutamine + ATP + H2O = CTP + L-glutamate + ADP + phosphate + 2 H(+). The enzyme catalyses L-glutamine + H2O = L-glutamate + NH4(+). It catalyses the reaction UTP + NH4(+) + ATP = CTP + ADP + phosphate + 2 H(+). The protein operates within pyrimidine metabolism; CTP biosynthesis via de novo pathway; CTP from UDP: step 2/2. With respect to regulation, allosterically activated by GTP, when glutamine is the substrate; GTP has no effect on the reaction when ammonia is the substrate. The allosteric effector GTP functions by stabilizing the protein conformation that binds the tetrahedral intermediate(s) formed during glutamine hydrolysis. Inhibited by the product CTP, via allosteric rather than competitive inhibition. Catalyzes the ATP-dependent amination of UTP to CTP with either L-glutamine or ammonia as the source of nitrogen. Regulates intracellular CTP levels through interactions with the four ribonucleotide triphosphates. The protein is CTP synthase of Carboxydothermus hydrogenoformans (strain ATCC BAA-161 / DSM 6008 / Z-2901).